The following is a 210-amino-acid chain: Tetraspanin-31 (210 aa).

At 1–12 (MVCGGFACSKNA) the chain is on the cytoplasmic side. A helical membrane pass occupies residues 13–33 (LCALNVVYMLVSLLLIGVAAW). The Extracellular segment spans residues 34 to 44 (GKGLGLVSSIH). The helical transmembrane segment at 45–65 (IIGGVIAVGVFLLLIAVAGLV) threads the bilayer. At 66–72 (GAVNHHQ) the chain is on the cytoplasmic side. A helical transmembrane segment spans residues 73 to 93 (VLLFFYMIILGLVFIFQFVIS). Over 94-173 (CSCLAINRSK…FLKHSDEALK (80 aa)) the chain is Extracellular. 4 N-linked (GlcNAc...) asparagine glycosylation sites follow: asparagine 100, asparagine 109, asparagine 117, and asparagine 134. Residues 174 to 194 (ILGGVGLFFSFTEILGVWLAM) form a helical membrane-spanning segment. Over 195–210 (RFRNQKDPRANPSAFL) the chain is Cytoplasmic.

It belongs to the tetraspanin (TM4SF) family.

It localises to the membrane. This Homo sapiens (Human) protein is Tetraspanin-31 (TSPAN31).